Consider the following 87-residue polypeptide: Small ribosomal subunit protein bS20 (87 aa).

The interval 1–29 (MANTAQARKRARQAVKQNAHNSSQRSTLR) is disordered. Residues 20-29 (HNSSQRSTLR) are compositionally biased toward polar residues.

It belongs to the bacterial ribosomal protein bS20 family.

In terms of biological role, binds directly to 16S ribosomal RNA. The protein is Small ribosomal subunit protein bS20 of Janthinobacterium sp. (strain Marseille) (Minibacterium massiliensis).